We begin with the raw amino-acid sequence, 341 residues long: 5-formaminoimidazole-4-carboxamide-1-(beta)-D-ribofuranosyl 5'-monophosphate synthetase (341 aa).

Positions 10 and 77 each coordinate 5-amino-1-(5-phospho-beta-D-ribosyl)imidazole-4-carboxamide. The ATP-grasp domain occupies Asp106 to Ile317. Residues Asp132–Tyr188 and Glu210 contribute to the ATP site. 5-amino-1-(5-phospho-beta-D-ribosyl)imidazole-4-carboxamide is bound at residue Asn238. Mg(2+) is bound by residues Glu277 and Glu290.

It belongs to the phosphohexose mutase family. Mg(2+) is required as a cofactor. It depends on Mn(2+) as a cofactor.

It catalyses the reaction 5-amino-1-(5-phospho-beta-D-ribosyl)imidazole-4-carboxamide + formate + ATP = 5-formamido-1-(5-phospho-D-ribosyl)imidazole-4-carboxamide + ADP + phosphate. The protein operates within purine metabolism; IMP biosynthesis via de novo pathway; 5-formamido-1-(5-phospho-D-ribosyl)imidazole-4-carboxamide from 5-amino-1-(5-phospho-D-ribosyl)imidazole-4-carboxamide (formate route): step 1/1. Its function is as follows. Catalyzes the ATP- and formate-dependent formylation of 5-aminoimidazole-4-carboxamide-1-beta-d-ribofuranosyl 5'-monophosphate (AICAR) to 5-formaminoimidazole-4-carboxamide-1-beta-d-ribofuranosyl 5'-monophosphate (FAICAR) in the absence of folates. The sequence is that of 5-formaminoimidazole-4-carboxamide-1-(beta)-D-ribofuranosyl 5'-monophosphate synthetase from Cenarchaeum symbiosum (strain A).